Here is a 305-residue protein sequence, read N- to C-terminus: UPF0282 protein Pisl_0021 (305 aa).

This sequence belongs to the UPF0282 family.

This chain is UPF0282 protein Pisl_0021, found in Pyrobaculum islandicum (strain DSM 4184 / JCM 9189 / GEO3).